The primary structure comprises 395 residues: NKAP-like protein (395 aa).

Disordered regions lie at residues 1–77 and 91–247; these read MSPV…RPLP and CGGY…ISCK. 2 positions are modified to phosphoserine: Ser23 and Ser25. The segment covering 25-35 has biased composition (polar residues); it reads SPPSALQTSRS. Residues 109–130 are compositionally biased toward basic and acidic residues; that stretch reads DQEKEKEESYRQRRLKERERIG. A Phosphoserine modification is found at Ser149. Residues 150–161 are compositionally biased toward basic and acidic residues; that stretch reads DEHTPAEDEVKN. Basic residues-rich tracts occupy residues 177–197 and 214–238; these read KTSH…KHKK and KKVK…KRTK.

This sequence belongs to the NKAP family. Interacts with RBPJ, CIR1 and HDAC3. In terms of tissue distribution, specific to testis (at protein level). Detected in differenting spermatogonia and early spermatocytes (at protein level).

It localises to the nucleus. In terms of biological role, transcriptional repressor of Notch-mediated signaling. Required for spermatogenesis. In Mus musculus (Mouse), this protein is NKAP-like protein.